The primary structure comprises 113 residues: Large ribosomal subunit protein uL22 (113 aa).

The protein belongs to the universal ribosomal protein uL22 family. In terms of assembly, part of the 50S ribosomal subunit.

Functionally, this protein binds specifically to 23S rRNA; its binding is stimulated by other ribosomal proteins, e.g. L4, L17, and L20. It is important during the early stages of 50S assembly. It makes multiple contacts with different domains of the 23S rRNA in the assembled 50S subunit and ribosome. In terms of biological role, the globular domain of the protein is located near the polypeptide exit tunnel on the outside of the subunit, while an extended beta-hairpin is found that lines the wall of the exit tunnel in the center of the 70S ribosome. The sequence is that of Large ribosomal subunit protein uL22 from Xanthomonas axonopodis pv. citri (strain 306).